The sequence spans 936 residues: MTDYKDTLNLPQTDFPMRANLPEREPQTLARWQTLDLYRKIRKDREGQPKFILHDGPPYANGRAHLGTAFNKTLKDIVVKSKTLSGFDAPFVPGWDCHGLPIELNVEKKLGKDKLSANAFRQACRDYAFSQIELQRDDFQRLGVLGDWQHPYLTMDFGYEADTVRALAKIVANGHLLRGQKPVHWCAACGSALAEAEVEYRDKASPAVDVGFEAVDAEAVRQRFGVKNATTRVLVPIWTTTPWTLPANEAVSVHPELHYALVKSELQNQPVYLILAKDLVDSAMLRYGVDDYEVHGNLKGDALEGMQLQHPFLDRIVPIILGEHVTTEAGTGNVHTAPAHGLEDYFVAEKYNLPINNPVDARGRFIPDTFLVGGQPVFKANEPIIVLLADSGHLLHSETIQHSYPHCWRHKTPLIFRATPQWFIGMNKNGLRERALAEIEKVTWLPAWGEARIGKLVADRPDWCISRQRLWGIPIPLFIHKKSGELHPKSPALMEKVAQLIEKESVDAWFDLDPKVLLGDDADHYEKVTDVLDVWFDSGVTHFCVLEKRRELKVPADIYLEGSDQHRGWFQSSLLTSLAIRDKAPYKSVLTYGFVVDSQGRKMSKSLGNVILPADVVKNLGADVLRLWAASMDYTVEVNVSDEILKRASDAYRRIRNTARFLLSNLYDFDPKKDKVAVDQLVALDRWAIFTTQKLQEKIITAYDRYRFPAIYQAIHNFCTVEMGSFYLDIIKDRLYTSKESGLPRRSAQTALYYIAEAFVRWIAPIISFTADEIWQFMPGDREPSVFLTQWFSDFPNAALSGEEEQRWQLLLQIRDEVNKALETYRNEGKIGSALTAEVVLYADERLNAVIATLGEELRFVLITSEASVLPFNEKSKAAFDTALPGLALEINVSEFEKCARCWQRRSSVGQIKEHADLCDRCVSNAFEDGEMRQFA.

A 'HIGH' region motif is present at residues 58-68 (PYANGRAHLGT). L-isoleucyl-5'-AMP is bound at residue E561. A 'KMSKS' region motif is present at residues 602–606 (KMSKS). K605 lines the ATP pocket. The Zn(2+) site is built by C899, C902, C919, and C922.

Belongs to the class-I aminoacyl-tRNA synthetase family. IleS type 1 subfamily. In terms of assembly, monomer. It depends on Zn(2+) as a cofactor.

The protein localises to the cytoplasm. The enzyme catalyses tRNA(Ile) + L-isoleucine + ATP = L-isoleucyl-tRNA(Ile) + AMP + diphosphate. Catalyzes the attachment of isoleucine to tRNA(Ile). As IleRS can inadvertently accommodate and process structurally similar amino acids such as valine, to avoid such errors it has two additional distinct tRNA(Ile)-dependent editing activities. One activity is designated as 'pretransfer' editing and involves the hydrolysis of activated Val-AMP. The other activity is designated 'posttransfer' editing and involves deacylation of mischarged Val-tRNA(Ile). The sequence is that of Isoleucine--tRNA ligase from Coxiella burnetii (strain RSA 331 / Henzerling II).